A 91-amino-acid polypeptide reads, in one-letter code: ATP synthase subunit c 2 (91 aa).

2 consecutive transmembrane segments (helical) span residues 4–24 (FSMC…GTGI) and 53–73 (IGLA…LIIL).

It belongs to the ATPase C chain family. As to quaternary structure, F-type ATPases have 2 components, F(1) - the catalytic core - and F(0) - the membrane proton channel. F(1) has five subunits: alpha(3), beta(3), gamma(1), delta(1), epsilon(1). F(0) has three main subunits: a(1), b(2) and c(10-14). The alpha and beta chains form an alternating ring which encloses part of the gamma chain. F(1) is attached to F(0) by a central stalk formed by the gamma and epsilon chains, while a peripheral stalk is formed by the delta and b chains.

Its subcellular location is the cell inner membrane. In terms of biological role, f(1)F(0) ATP synthase produces ATP from ADP in the presence of a proton or sodium gradient. F-type ATPases consist of two structural domains, F(1) containing the extramembraneous catalytic core and F(0) containing the membrane proton channel, linked together by a central stalk and a peripheral stalk. During catalysis, ATP synthesis in the catalytic domain of F(1) is coupled via a rotary mechanism of the central stalk subunits to proton translocation. Its function is as follows. Key component of the F(0) channel; it plays a direct role in translocation across the membrane. A homomeric c-ring of between 10-14 subunits forms the central stalk rotor element with the F(1) delta and epsilon subunits. This chain is ATP synthase subunit c 2, found in Pelobacter propionicus (strain DSM 2379 / NBRC 103807 / OttBd1).